The chain runs to 470 residues: Cell division protein FtsP (470 aa).

A signal peptide (tat-type signal) is located at residues 1-29 (MKNCSRRQLLKTTLFSTALFSVPAPLLAA).

It belongs to the FtsP family. Predicted to be exported by the Tat system. The position of the signal peptide cleavage has not been experimentally proven.

The protein localises to the periplasm. Its function is as follows. Cell division protein that is required for growth during stress conditions. May be involved in protecting or stabilizing the divisomal assembly under conditions of stress. The protein is Cell division protein FtsP of Aggregatibacter aphrophilus (strain NJ8700) (Haemophilus aphrophilus).